The primary structure comprises 287 residues: 4-hydroxybenzoate octaprenyltransferase (287 aa).

A run of 5 helical transmembrane segments spans residues 35-55, 96-116, 211-231, 235-255, and 262-282; these read FAAG…GVVV, LFGV…PLVV, IIAA…MLAG, IYGL…KLIY, and CFTA…ALTL.

Belongs to the UbiA prenyltransferase family. Mg(2+) is required as a cofactor.

The protein resides in the cell inner membrane. It catalyses the reaction all-trans-octaprenyl diphosphate + 4-hydroxybenzoate = 4-hydroxy-3-(all-trans-octaprenyl)benzoate + diphosphate. Its pathway is cofactor biosynthesis; ubiquinone biosynthesis. Catalyzes the prenylation of para-hydroxybenzoate (PHB) with an all-trans polyprenyl group. Mediates the second step in the final reaction sequence of ubiquinone-8 (UQ-8) biosynthesis, which is the condensation of the polyisoprenoid side chain with PHB, generating the first membrane-bound Q intermediate 3-octaprenyl-4-hydroxybenzoate. The chain is 4-hydroxybenzoate octaprenyltransferase from Shewanella halifaxensis (strain HAW-EB4).